A 310-amino-acid polypeptide reads, in one-letter code: Ribonuclease HIII (310 aa).

In terms of domain architecture, RNase H type-2 spans 91 to 307; the sequence is YNCIGSDEAG…REKAQNLVTK (217 aa). A divalent metal cation contacts are provided by D97, E98, and D202.

Belongs to the RNase HII family. RnhC subfamily. Mn(2+) is required as a cofactor. It depends on Mg(2+) as a cofactor.

The protein localises to the cytoplasm. It carries out the reaction Endonucleolytic cleavage to 5'-phosphomonoester.. Its function is as follows. Endonuclease that specifically degrades the RNA of RNA-DNA hybrids. This is Ribonuclease HIII from Staphylococcus haemolyticus (strain JCSC1435).